The primary structure comprises 238 residues: uncharacterized protein (238 aa).

The next 4 helical transmembrane spans lie at 16-36 (HLIIFSKMLLAMVLGSVIGLE), 44-64 (VGVKTCAIIAVTTCVLTIVSI), 81-101 (PMRLAAQVISGIGFLGAGVIL), and 123-143 (IGIAAGAGFVFDAVIATVMIL).

This sequence belongs to the MgtC/SapB family.

It is found in the cell inner membrane. This is an uncharacterized protein from Haemophilus influenzae (strain ATCC 51907 / DSM 11121 / KW20 / Rd).